Reading from the N-terminus, the 2097-residue chain is SCAR-like protein 1 (2097 aa).

Disordered stretches follow at residues 205-227 (IANSESHTTSKDRSSRKVPPRTT), 544-565 (AHSSDKQSSQKSSGLDGSSIES), 1443-1467 (SQIASCSPTPSNEKIDELNAPPLSS), 1588-1616 (STEETYRLSSPVPPPNEPFSNVSYEDPQK), 1730-1802 (QERV…EKTV), 1820-1842 (ASSHVSENGCNQQSHGESLPVTS), and 1893-1944 (YEGP…EGGY). Over residues 549–562 (KQSSQKSSGLDGSS) the composition is skewed to low complexity. Over residues 1443–1454 (SQIASCSPTPSN) the composition is skewed to polar residues. Over residues 1766–1794 (SISQQGLQGSVFPSDTSDNGEHSSYTSRA) the composition is skewed to polar residues. Basic and acidic residues predominate over residues 1908–1922 (YPHDDHNSEKEDIHQ). In terms of domain architecture, WH2 spans 2028–2046 (ERNLLLEQIRNKTFNLKPV).

This sequence belongs to the SCAR/WAVE family.

It is found in the cytoplasm. The protein localises to the cytoskeleton. Involved in regulation of actin and microtubule organization. Part of a WAVE complex that activates the Arp2/3 complex. In Oryza sativa subsp. japonica (Rice), this protein is SCAR-like protein 1.